The following is a 414-amino-acid chain: Gamma-glutamyl phosphate reductase (414 aa).

It belongs to the gamma-glutamyl phosphate reductase family.

It is found in the cytoplasm. The catalysed reaction is L-glutamate 5-semialdehyde + phosphate + NADP(+) = L-glutamyl 5-phosphate + NADPH + H(+). The protein operates within amino-acid biosynthesis; L-proline biosynthesis; L-glutamate 5-semialdehyde from L-glutamate: step 2/2. Catalyzes the NADPH-dependent reduction of L-glutamate 5-phosphate into L-glutamate 5-semialdehyde and phosphate. The product spontaneously undergoes cyclization to form 1-pyrroline-5-carboxylate. This is Gamma-glutamyl phosphate reductase from Xanthomonas axonopodis pv. citri (strain 306).